The primary structure comprises 337 residues: Nodulation protein D 2 (337 aa).

The HTH lysR-type domain occupies 6–63 (LDLNLLVVLDSLMTARNLTAAARSINLSQPAMSAAVARLRAYFGDELFTMRGRTLVPT). Positions 23–42 (LTAAARSINLSQPAMSAAVA) form a DNA-binding region, H-T-H motif.

It belongs to the LysR transcriptional regulatory family.

In terms of biological role, nodD regulates the expression of the nodABCFE genes which encode other nodulation proteins. NodD is also a negative regulator of its own expression. Binds flavonoids as inducers. This Bradyrhizobium sp. (strain NC92) protein is Nodulation protein D 2 (nodD2).